The primary structure comprises 256 residues: Phosphomannomutase (256 aa).

Asp12 acts as the Nucleophile in catalysis. Mg(2+) contacts are provided by Asp12 and Asp14. The active-site Proton donor/acceptor is the Asp14. Residues Arg21, Arg123, Arg134, Arg141, Ser179, and Asp181 each coordinate alpha-D-mannose 1-phosphate. Asp209 is a Mg(2+) binding site.

Belongs to the eukaryotic PMM family. In terms of assembly, homodimer.

It localises to the cytoplasm. It carries out the reaction alpha-D-mannose 1-phosphate = D-mannose 6-phosphate. It functions in the pathway nucleotide-sugar biosynthesis; GDP-alpha-D-mannose biosynthesis; alpha-D-mannose 1-phosphate from D-fructose 6-phosphate: step 2/2. Involved in the synthesis of the GDP-mannose and dolichol-phosphate-mannose required for a number of critical mannosyl transfer reactions. The protein is Phosphomannomutase (SEC53) of Encephalitozoon cuniculi (strain GB-M1) (Microsporidian parasite).